Here is a 250-residue protein sequence, read N- to C-terminus: Small ribosomal subunit protein uS2 (250 aa).

It belongs to the universal ribosomal protein uS2 family.

The sequence is that of Small ribosomal subunit protein uS2 from Paracidovorax citrulli (strain AAC00-1) (Acidovorax citrulli).